Reading from the N-terminus, the 308-residue chain is Cytochrome c biogenesis protein CcsA (308 aa).

Helical transmembrane passes span 17-37, 43-63, 70-90, 142-162, 213-233, 246-260, and 274-294; these read IISI…VGLC, GMIT…IYSG, LYES…VPYF, MLLS…LLVI, VIGL…VWAN, ETWA…AIYL, and AIVA…VNLL.

This sequence belongs to the CcmF/CycK/Ccl1/NrfE/CcsA family. May interact with Ccs1.

The protein resides in the plastid. It is found in the chloroplast thylakoid membrane. Its function is as follows. Required during biogenesis of c-type cytochromes (cytochrome c6 and cytochrome f) at the step of heme attachment. The sequence is that of Cytochrome c biogenesis protein CcsA from Nymphaea alba (White water-lily).